We begin with the raw amino-acid sequence, 86 residues long: Small ribosomal subunit protein bS20 (86 aa).

The protein belongs to the bacterial ribosomal protein bS20 family.

Its function is as follows. Binds directly to 16S ribosomal RNA. In Pelagibacter ubique (strain HTCC1062), this protein is Small ribosomal subunit protein bS20.